The sequence spans 246 residues: Alpha-amylase inhibitor 1 (246 aa).

Positions 1–23 are cleaved as a signal peptide; the sequence is MIMASSKLLSLALFLALLSHANS. Residues asparagine 35, asparagine 88, and asparagine 163 are each glycosylated (N-linked (GlcNAc...) asparagine). A propeptide spanning residues 240–246 is cleaved from the precursor; sequence IVLNKIL.

Belongs to the leguminous lectin family. Heterodimer of chain 1 and chain 2. In terms of processing, proteolytic processing yields active form.

In terms of biological role, lectin and alpha-amylase inhibitor. Acts as a defensive protein against insects. This is Alpha-amylase inhibitor 1 (LLP) from Phaseolus vulgaris (Kidney bean).